A 294-amino-acid chain; its full sequence is UPF0761 membrane protein YPK_4186 (294 aa).

Helical transmembrane passes span 44–64 (LLSL…FPMF), 67–87 (ISIK…GDII), 108–128 (GLIV…NIIW), 136–156 (LVFS…LVGA), 185–205 (VFPL…VPTV), 212–232 (ALIG…GFAM), and 246–266 (VLAV…IVLL).

Belongs to the UPF0761 family.

It localises to the cell inner membrane. The polypeptide is UPF0761 membrane protein YPK_4186 (Yersinia pseudotuberculosis serotype O:3 (strain YPIII)).